Reading from the N-terminus, the 179-residue chain is Large ribosomal subunit protein uL5 (179 aa).

This sequence belongs to the universal ribosomal protein uL5 family. In terms of assembly, part of the 50S ribosomal subunit; part of the 5S rRNA/L5/L18/L25 subcomplex. Contacts the 5S rRNA and the P site tRNA. Forms a bridge to the 30S subunit in the 70S ribosome.

In terms of biological role, this is one of the proteins that bind and probably mediate the attachment of the 5S RNA into the large ribosomal subunit, where it forms part of the central protuberance. In the 70S ribosome it contacts protein S13 of the 30S subunit (bridge B1b), connecting the 2 subunits; this bridge is implicated in subunit movement. Contacts the P site tRNA; the 5S rRNA and some of its associated proteins might help stabilize positioning of ribosome-bound tRNAs. This is Large ribosomal subunit protein uL5 from Shewanella baltica (strain OS223).